The sequence spans 109 residues: Flagellar hook-basal body complex protein FliE (109 aa).

It belongs to the FliE family.

Its subcellular location is the bacterial flagellum basal body. The chain is Flagellar hook-basal body complex protein FliE from Pseudomonas fluorescens (strain SBW25).